The chain runs to 580 residues: Glutamine--tRNA ligase (580 aa).

The short motif at 41–51 (PEPNGYLHIGH) is the 'HIGH' region element. Residues 42-44 (EPN) and 48-54 (HIGHAKA) each bind ATP. Residues D74 and Y218 each contribute to the L-glutamine site. ATP contacts are provided by residues T237, 285-286 (RL), and 293-295 (MSK). A 'KMSKS' region motif is present at residues 292–296 (VMSKR).

This sequence belongs to the class-I aminoacyl-tRNA synthetase family. Monomer.

Its subcellular location is the cytoplasm. It carries out the reaction tRNA(Gln) + L-glutamine + ATP = L-glutaminyl-tRNA(Gln) + AMP + diphosphate. This chain is Glutamine--tRNA ligase, found in Xylella fastidiosa (strain Temecula1 / ATCC 700964).